We begin with the raw amino-acid sequence, 210 residues long: Protein GrpE (210 aa).

Disordered stretches follow at residues M1–I40 and K191–A210. Residues D11 to A23 show a composition bias toward low complexity.

The protein belongs to the GrpE family. As to quaternary structure, homodimer.

The protein resides in the cytoplasm. In terms of biological role, participates actively in the response to hyperosmotic and heat shock by preventing the aggregation of stress-denatured proteins, in association with DnaK and GrpE. It is the nucleotide exchange factor for DnaK and may function as a thermosensor. Unfolded proteins bind initially to DnaJ; upon interaction with the DnaJ-bound protein, DnaK hydrolyzes its bound ATP, resulting in the formation of a stable complex. GrpE releases ADP from DnaK; ATP binding to DnaK triggers the release of the substrate protein, thus completing the reaction cycle. Several rounds of ATP-dependent interactions between DnaJ, DnaK and GrpE are required for fully efficient folding. This chain is Protein GrpE, found in Rhizobium johnstonii (strain DSM 114642 / LMG 32736 / 3841) (Rhizobium leguminosarum bv. viciae).